Here is a 635-residue protein sequence, read N- to C-terminus: Thrombopoietin receptor (635 aa).

Positions 1–25 (MPSWALFMVTSCLLLAPQNLAQVSS) are cleaved as a signal peptide. The Extracellular segment spans residues 26 to 491 (QDVSLLASDS…RVETATETAW (466 aa)). Cystine bridges form between cysteine 40-cysteine 50 and cysteine 77-cysteine 93. N-linked (GlcNAc...) asparagine glycosylation is found at asparagine 117 and asparagine 178. The 110-residue stretch at 172-281 (GPRDPKNSTG…WSLPVTVDLP (110 aa)) folds into the Fibronectin type-III 1 domain. Cystine bridges form between cysteine 193–cysteine 323, cysteine 194–cysteine 241, cysteine 291–cysteine 301, and cysteine 334–cysteine 352. A disordered region spans residues 205–232 (ALDQSPCAQPTMPWQDGPKQTSPSREAS). Asparagine 298 is a glycosylation site (N-linked (GlcNAc...) asparagine). Asparagine 358 carries N-linked (GlcNAc...) asparagine glycosylation. Positions 392–486 (PTPNLHWREI…WSDPTRVETA (95 aa)) constitute a Fibronectin type-III 2 domain. The short motif at 474 to 478 (WSSWS) is the WSXWS motif element. A helical membrane pass occupies residues 492 to 513 (ISLVTALHLVLGLSAVLGLLLL). Residues 514–635 (RWQFPAHYRR…YLPLSYWQQP (122 aa)) lie on the Cytoplasmic side of the membrane. Residues 528–536 (LWPSLPDLH) carry the Box 1 motif motif. Residues lysine 553 and lysine 573 each participate in a glycyl lysine isopeptide (Lys-Gly) (interchain with G-Cter in ubiquitin) cross-link. Phosphotyrosine occurs at positions 591, 626, and 631.

This sequence belongs to the type I cytokine receptor family. Type 1 subfamily. As to quaternary structure, homodimer. Interacts with ATXN2L. Interacts with JAK2 and TYK2; these interactions increase MPL localization to the cell membrane. Interacts with THPO. Interacts with SHIP/INPP5D. Interacts with BTK. Interacts with SYK; this interaction negatively regulates THPO-mediated ERK1/2 signaling. In terms of processing, phosphorylated at Tyr-591 in response to THPO stimulation. Ubiquitination at Lys-553 and Lys-573 targets MPL for degradation by both the lysosomal and proteasomal pathways. The E3 ubiquitin-protein ligase CBL significantly contributes to this ubiquitination. As to expression, expressed at a low level in a large number of cells of hematopoietic origin. Isoform 1 and isoform 2 are always found to be coexpressed.

It localises to the cell membrane. Its subcellular location is the golgi apparatus. It is found in the cell surface. In terms of biological role, receptor for thrombopoietin that regulates hematopoietic stem cell renewal, megakaryocyte differentiation, and platelet formation. Upon activation by THPO, induces rapid tyrosine phosphorylation and activation of JAK2, providing docking sites for many signaling proteins such as STAT5, SHIP/INPP5D, GRB2, SOS1 and PI3K. In turn, These signaling cascades lead to the proliferation, survival, and differentiation of megakaryocytes, ultimately leading to increased platelet production. The chain is Thrombopoietin receptor (MPL) from Homo sapiens (Human).